The chain runs to 137 residues: MRNFDLSPLYRSAIGFDRLFNHLENNQSQSNGGYPPYNVELVDENHYRIAIAVAGFAESELEITAQDNLLVVKGAHADEQKERTYLYQGIAERNFERKFQLAENIHVRGANLVNGLLYIDLERVIPEAKKPRRIEIN.

In terms of domain architecture, sHSP spans 28–137 (SQSNGGYPPY…AKKPRRIEIN (110 aa)).

The protein belongs to the small heat shock protein (HSP20) family. In terms of assembly, monomer. Forms homomultimers of about 100-150 subunits at optimal growth temperatures. Conformation changes to monomers at high temperatures or high ionic concentrations.

Its subcellular location is the cytoplasm. Functionally, associates with aggregated proteins, together with IbpB, to stabilize and protect them from irreversible denaturation and extensive proteolysis during heat shock and oxidative stress. Aggregated proteins bound to the IbpAB complex are more efficiently refolded and reactivated by the ATP-dependent chaperone systems ClpB and DnaK/DnaJ/GrpE. Its activity is ATP-independent. This is Small heat shock protein IbpA from Shigella sonnei (strain Ss046).